The sequence spans 121 residues: Small ribosomal subunit protein uS11c (121 aa).

The protein belongs to the universal ribosomal protein uS11 family. As to quaternary structure, part of the 30S ribosomal subunit.

Its subcellular location is the plastid. It localises to the chloroplast. The chain is Small ribosomal subunit protein uS11c from Cyanidioschyzon merolae (strain NIES-3377 / 10D) (Unicellular red alga).